A 267-amino-acid chain; its full sequence is Probable proteasome subunit beta type-2 (267 aa).

A propeptide spans 1-35 (MMGINERKGFDFEYYQRNLLLQEKGFPTPKATSTG) (removed in mature form). T36 functions as the Nucleophile in the catalytic mechanism.

It belongs to the peptidase T1B family. The 26S proteasome consists of a 20S proteasome core and two 19S regulatory subunits. The 20S proteasome core is composed of 28 subunits that are arranged in four stacked rings, resulting in a barrel-shaped structure. The two end rings are each formed by seven alpha subunits, and the two central rings are each formed by seven beta subunits. The catalytic chamber with the active sites is on the inside of the barrel.

It localises to the cytoplasm. It is found in the nucleus. The catalysed reaction is Cleavage of peptide bonds with very broad specificity.. The proteasome is a multicatalytic proteinase complex which is characterized by its ability to cleave peptides with Arg, Phe, Tyr, Leu, and Glu adjacent to the leaving group at neutral or slightly basic pH. The proteasome has an ATP-dependent proteolytic activity (Potential). The protein is Probable proteasome subunit beta type-2 (pup1) of Schizosaccharomyces pombe (strain 972 / ATCC 24843) (Fission yeast).